Reading from the N-terminus, the 82-residue chain is Small ribosomal subunit protein bS18 (82 aa).

The tract at residues 1–20 (MSEINQTVTRRPFHRRRKTC) is disordered.

Belongs to the bacterial ribosomal protein bS18 family. In terms of assembly, part of the 30S ribosomal subunit. Forms a tight heterodimer with protein bS6.

Binds as a heterodimer with protein bS6 to the central domain of the 16S rRNA, where it helps stabilize the platform of the 30S subunit. In Bartonella quintana (strain Toulouse) (Rochalimaea quintana), this protein is Small ribosomal subunit protein bS18.